The sequence spans 202 residues: N-(5'-phosphoribosyl)anthranilate isomerase (202 aa).

Belongs to the TrpF family.

It carries out the reaction N-(5-phospho-beta-D-ribosyl)anthranilate = 1-(2-carboxyphenylamino)-1-deoxy-D-ribulose 5-phosphate. The protein operates within amino-acid biosynthesis; L-tryptophan biosynthesis; L-tryptophan from chorismate: step 3/5. The chain is N-(5'-phosphoribosyl)anthranilate isomerase from Listeria monocytogenes serotype 4a (strain HCC23).